Here is a 458-residue protein sequence, read N- to C-terminus: Phosphomethylpyrimidine synthase (458 aa).

Substrate-binding positions include N80, M109, Y139, H175, 195–197, 236–239, and E275; these read SRG and DSLR. H279 contributes to the Zn(2+) binding site. Y302 serves as a coordination point for substrate. A Zn(2+)-binding site is contributed by H343. [4Fe-4S] cluster-binding residues include C423, C426, and C431.

The protein belongs to the ThiC family. It depends on [4Fe-4S] cluster as a cofactor.

The catalysed reaction is 5-amino-1-(5-phospho-beta-D-ribosyl)imidazole + S-adenosyl-L-methionine = 4-amino-2-methyl-5-(phosphooxymethyl)pyrimidine + CO + 5'-deoxyadenosine + formate + L-methionine + 3 H(+). It functions in the pathway cofactor biosynthesis; thiamine diphosphate biosynthesis. Functionally, catalyzes the synthesis of the hydroxymethylpyrimidine phosphate (HMP-P) moiety of thiamine from aminoimidazole ribotide (AIR) in a radical S-adenosyl-L-methionine (SAM)-dependent reaction. This Acaryochloris marina (strain MBIC 11017) protein is Phosphomethylpyrimidine synthase.